Here is a 391-residue protein sequence, read N- to C-terminus: Thyroid hormone receptor alpha-B (391 aa).

Residues 1–32 (MAQWPEKEEEEQPMFGEEYTGYIPSYLEKDEP) form a modulating region. 2 consecutive NR C4-type zinc fingers follow at residues 33–53 (CVVCGDKATGYHYRCITCEGC) and 71–95 (CKYDCCCIIDKITRNQCQLCRFKKC). The segment at residues 33 to 100 (CVVCGDKATG…RFKKCIAVGM (68 aa)) is a DNA-binding region (nuclear receptor). One can recognise an NR LBD domain in the interval 143–388 (AEWELIRMVT…PPLFLEVFED (246 aa)).

This sequence belongs to the nuclear hormone receptor family. NR1 subfamily.

Its subcellular location is the nucleus. Its function is as follows. High affinity receptor for triiodothyronine. In Paralichthys olivaceus (Bastard halibut), this protein is Thyroid hormone receptor alpha-B (thra2).